Reading from the N-terminus, the 323-residue chain is Sphingolipid delta(4)-desaturase DES1 (323 aa).

Gly2 carries the N-myristoyl glycine lipid modification. 2 helical membrane-spanning segments follow: residues 41-61 and 68-88; these read PNLI…FYIV and WVIF…TLAI. The Histidine box-1 signature appears at 89–93; the sequence is HEIAH. A helical transmembrane segment spans residues 102-122; that stretch reads AMWNRWFGMFANLPIGIPYSI. Positions 128–132 match the Histidine box-2 motif; it reads HMDHH. 3 helical membrane-spanning segments follow: residues 152-172, 184-204, and 209-229; these read FFCT…FYAF, YLEV…YYFL, and LVYM…SGHF. The Histidine box-3 motif lies at 259-263; sequence HNEHH. Position 307 is a phosphoserine (Ser307).

The protein belongs to the fatty acid desaturase type 1 family. DEGS subfamily. As to quaternary structure, interacts with RLBP1; the interaction increases synthesis of chromophore-precursors by DEGS1. Myristoylation can target the enzyme to the mitochondria leading to an increase in ceramide levels. Ubiquitous.

The protein resides in the mitochondrion membrane. It localises to the endoplasmic reticulum membrane. The enzyme catalyses an N-acylsphinganine + 2 Fe(II)-[cytochrome b5] + O2 + 2 H(+) = an N-acylsphing-4-enine + 2 Fe(III)-[cytochrome b5] + 2 H2O. It carries out the reaction all-trans-retinol = 11-cis-retinol. The catalysed reaction is all-trans-retinol = 9-cis-retinol. It catalyses the reaction all-trans-retinol = 13-cis-retinol. The enzyme catalyses 11-cis-retinol = 13-cis-retinol. It carries out the reaction 11-cis-retinol = 9-cis-retinol. Its function is as follows. Has sphingolipid-delta-4-desaturase activity. Converts D-erythro-sphinganine to D-erythro-sphingosine (E-sphing-4-enine). Catalyzes the equilibrium isomerization of retinols. In Homo sapiens (Human), this protein is Sphingolipid delta(4)-desaturase DES1.